Consider the following 70-residue polypeptide: Large ribosomal subunit protein bL31 (70 aa).

Positions 16, 18, 37, and 40 each coordinate Zn(2+). The tract at residues 48–70 (QRQASSGGRVDKFNKRFGALGSK) is disordered.

It belongs to the bacterial ribosomal protein bL31 family. Type A subfamily. Part of the 50S ribosomal subunit. Requires Zn(2+) as cofactor.

Binds the 23S rRNA. The sequence is that of Large ribosomal subunit protein bL31 from Photobacterium profundum (strain SS9).